The chain runs to 170 residues: Lipoprotein signal peptidase (170 aa).

3 helical membrane passes run 9–29 (FNIF…KYLV), 72–92 (IFFI…ALKE), and 95–117 (CITR…DRLF). Active-site residues include Asp124 and Asp146. A helical membrane pass occupies residues 143–163 (NFADSYVVIGMILFLVYDFFI).

It belongs to the peptidase A8 family.

Its subcellular location is the cell inner membrane. The enzyme catalyses Release of signal peptides from bacterial membrane prolipoproteins. Hydrolyzes -Xaa-Yaa-Zaa-|-(S,diacylglyceryl)Cys-, in which Xaa is hydrophobic (preferably Leu), and Yaa (Ala or Ser) and Zaa (Gly or Ala) have small, neutral side chains.. Its pathway is protein modification; lipoprotein biosynthesis (signal peptide cleavage). In terms of biological role, this protein specifically catalyzes the removal of signal peptides from prolipoproteins. The sequence is that of Lipoprotein signal peptidase from Borrelia garinii subsp. bavariensis (strain ATCC BAA-2496 / DSM 23469 / PBi) (Borreliella bavariensis).